The sequence spans 284 residues: Nucleotide-binding protein Sbal195_0713 (284 aa).

Residue 8–15 (GRSGSGKS) coordinates ATP. 56–59 (DVRN) is a binding site for GTP.

The protein belongs to the RapZ-like family.

Functionally, displays ATPase and GTPase activities. The protein is Nucleotide-binding protein Sbal195_0713 of Shewanella baltica (strain OS195).